The chain runs to 417 residues: Magnesium-protoporphyrin IX monomethyl ester [oxidative] cyclase, chloroplastic (417 aa).

The N-terminal 45 residues, 1–45, are a transit peptide targeting the chloroplast; sequence MASAMELSLLNPAMHHYGIAAKTASHLPVVPARRASSGAVRFRVR.

This sequence belongs to the AcsF family. Fe cation serves as cofactor.

The protein resides in the plastid. It localises to the chloroplast membrane. It carries out the reaction Mg-protoporphyrin IX 13-monomethyl ester + 3 NADPH + 3 O2 + 2 H(+) = 3,8-divinyl protochlorophyllide a + 3 NADP(+) + 5 H2O. It participates in porphyrin-containing compound metabolism; chlorophyll biosynthesis. Its function is as follows. Catalyzes the formation of the isocyclic ring in chlorophyll biosynthesis. Mediates the cyclase reaction, which results in the formation of divinylprotochlorophyllide (Pchlide) characteristic of all chlorophylls from magnesium-protoporphyrin IX 13-monomethyl ester (MgPMME). The sequence is that of Magnesium-protoporphyrin IX monomethyl ester [oxidative] cyclase, chloroplastic (CRD1) from Hordeum vulgare (Barley).